The following is a 149-amino-acid chain: Large ribosomal subunit protein bL9 (149 aa).

It belongs to the bacterial ribosomal protein bL9 family.

In terms of biological role, binds to the 23S rRNA. This chain is Large ribosomal subunit protein bL9, found in Bacillus velezensis (strain DSM 23117 / BGSC 10A6 / LMG 26770 / FZB42) (Bacillus amyloliquefaciens subsp. plantarum).